Reading from the N-terminus, the 251-residue chain is UDP-N-acetylglucosamine--dolichyl-phosphate N-acetylglucosaminyltransferase (251 aa).

A helical membrane pass occupies residues 150-167 (VGNLGLSFITFLLGGYYV).

Belongs to the glycosyltransferase 2 family.

Its subcellular location is the cell membrane. It catalyses the reaction a di-trans,poly-cis-dolichyl phosphate + UDP-N-acetyl-alpha-D-glucosamine = an N-acetyl-alpha-D-glucosaminyl-phospho-di-trans,poly-cis-dolichol + UDP. Its pathway is cell surface structure biogenesis; S-layer biogenesis. The protein operates within protein modification; protein glycosylation. In terms of biological role, involved in the assembly of an N-linked disaccharide that decorates the S-layer glycoprotein and flagellins. AglK initiates N-linked glycosylation through the formation of alpha-linked dolichyl monophosphate N-acetylglucosamine. It catalyzes the transfer of GlcNAc from the donor substrate UDP-GlcNAc to dolichyl phosphate C55 (Dol-P) to yield Dol-P-GlcNAc. AglK reaction proceeds with retention of stereochemistry. The reaction is specific for UDP-GlcNAc. AglK shows a stronger preference for short dolichol (C55-60 Dol-P) substrates compared with the longer (C85-105 Dol-P). The chain is UDP-N-acetylglucosamine--dolichyl-phosphate N-acetylglucosaminyltransferase from Methanococcus voltae.